The sequence spans 215 residues: Cytochrome b6 (215 aa).

Residues 32–52 (IFYCLGGITLTCFLVQVATGF) traverse the membrane as a helical segment. Cysteine 35 contacts heme c. Histidine 86 and histidine 100 together coordinate heme b. 3 consecutive transmembrane segments (helical) span residues 90-110 (ASMM…TGGF), 116-136 (LTWV…VTGY), and 186-206 (LHTF…FPMI). Heme b is bound by residues histidine 187 and histidine 202.

This sequence belongs to the cytochrome b family. PetB subfamily. The 4 large subunits of the cytochrome b6-f complex are cytochrome b6, subunit IV (17 kDa polypeptide, PetD), cytochrome f and the Rieske protein, while the 4 small subunits are PetG, PetL, PetM and PetN. The complex functions as a dimer. It depends on heme b as a cofactor. Heme c serves as cofactor.

The protein localises to the plastid. It localises to the chloroplast thylakoid membrane. Functionally, component of the cytochrome b6-f complex, which mediates electron transfer between photosystem II (PSII) and photosystem I (PSI), cyclic electron flow around PSI, and state transitions. This Agrostis stolonifera (Creeping bentgrass) protein is Cytochrome b6.